A 79-amino-acid polypeptide reads, in one-letter code: Large ribosomal subunit protein uL24 (79 aa).

It belongs to the universal ribosomal protein uL24 family. As to quaternary structure, part of the 50S ribosomal subunit.

Its function is as follows. One of two assembly initiator proteins, it binds directly to the 5'-end of the 23S rRNA, where it nucleates assembly of the 50S subunit. Functionally, one of the proteins that surrounds the polypeptide exit tunnel on the outside of the subunit. This chain is Large ribosomal subunit protein uL24, found in Lactobacillus gasseri (strain ATCC 33323 / DSM 20243 / BCRC 14619 / CIP 102991 / JCM 1131 / KCTC 3163 / NCIMB 11718 / NCTC 13722 / AM63).